The chain runs to 469 residues: 3-isopropylmalate dehydratase large subunit (469 aa).

Positions 347, 410, and 413 each coordinate [4Fe-4S] cluster.

Belongs to the aconitase/IPM isomerase family. LeuC type 1 subfamily. Heterodimer of LeuC and LeuD. Requires [4Fe-4S] cluster as cofactor.

It carries out the reaction (2R,3S)-3-isopropylmalate = (2S)-2-isopropylmalate. The protein operates within amino-acid biosynthesis; L-leucine biosynthesis; L-leucine from 3-methyl-2-oxobutanoate: step 2/4. Catalyzes the isomerization between 2-isopropylmalate and 3-isopropylmalate, via the formation of 2-isopropylmaleate. The polypeptide is 3-isopropylmalate dehydratase large subunit (Burkholderia thailandensis (strain ATCC 700388 / DSM 13276 / CCUG 48851 / CIP 106301 / E264)).